The chain runs to 69 residues: Small, acid-soluble spore protein C1 (69 aa).

Belongs to the alpha/beta-type SASP family.

In terms of biological role, SASP are bound to spore DNA. They are double-stranded DNA-binding proteins that cause DNA to change to an a-like conformation. They protect the DNA backbone from chemical and enzymatic cleavage and are thus involved in dormant spore's high resistance to UV light. The polypeptide is Small, acid-soluble spore protein C1 (SASP-C1) (Priestia megaterium (Bacillus megaterium)).